Consider the following 438-residue polypeptide: 3-phosphoshikimate 1-carboxyvinyltransferase (438 aa).

3 residues coordinate 3-phosphoshikimate: Lys21, Ser22, and Arg26. Lys21 provides a ligand contact to phosphoenolpyruvate. Phosphoenolpyruvate-binding residues include Gly95 and Arg123. 3-phosphoshikimate is bound by residues Ser167, Gln169, Asp315, and Lys342. Gln169 is a binding site for phosphoenolpyruvate. Asp315 serves as the catalytic Proton acceptor. Positions 346 and 387 each coordinate phosphoenolpyruvate.

Belongs to the EPSP synthase family. Monomer.

Its subcellular location is the cytoplasm. The enzyme catalyses 3-phosphoshikimate + phosphoenolpyruvate = 5-O-(1-carboxyvinyl)-3-phosphoshikimate + phosphate. Its pathway is metabolic intermediate biosynthesis; chorismate biosynthesis; chorismate from D-erythrose 4-phosphate and phosphoenolpyruvate: step 6/7. Functionally, catalyzes the transfer of the enolpyruvyl moiety of phosphoenolpyruvate (PEP) to the 5-hydroxyl of shikimate-3-phosphate (S3P) to produce enolpyruvyl shikimate-3-phosphate and inorganic phosphate. The protein is 3-phosphoshikimate 1-carboxyvinyltransferase of Coxiella burnetii (strain CbuG_Q212) (Coxiella burnetii (strain Q212)).